The sequence spans 388 residues: Chorismate synthase (388 aa).

2 residues coordinate NADP(+): Arg39 and Arg45. Residues 132–134 (RSS), 251–252 (NA), Gly296, 311–315 (KPIPT), and Arg337 each bind FMN.

Belongs to the chorismate synthase family. As to quaternary structure, homotetramer. It depends on FMNH2 as a cofactor.

It carries out the reaction 5-O-(1-carboxyvinyl)-3-phosphoshikimate = chorismate + phosphate. It functions in the pathway metabolic intermediate biosynthesis; chorismate biosynthesis; chorismate from D-erythrose 4-phosphate and phosphoenolpyruvate: step 7/7. Catalyzes the anti-1,4-elimination of the C-3 phosphate and the C-6 proR hydrogen from 5-enolpyruvylshikimate-3-phosphate (EPSP) to yield chorismate, which is the branch point compound that serves as the starting substrate for the three terminal pathways of aromatic amino acid biosynthesis. This reaction introduces a second double bond into the aromatic ring system. In Staphylococcus carnosus (strain TM300), this protein is Chorismate synthase.